Reading from the N-terminus, the 160-residue chain is CXXC motif containing zinc binding protein (160 aa).

Positions 33, 36, 67, and 70 each coordinate Zn(2+).

It belongs to the UPF0587 family.

The protein is CXXC motif containing zinc binding protein (czib) of Xenopus laevis (African clawed frog).